A 232-amino-acid polypeptide reads, in one-letter code: 2,3-bisphosphoglycerate-dependent phosphoglycerate mutase (232 aa).

Substrate contacts are provided by residues 8-15 (RHGESLWN), 21-22 (TG), arginine 60, 87-90 (ERHY), lysine 98, 114-115 (RR), and 183-184 (GN). The active-site Tele-phosphohistidine intermediate is histidine 9. Glutamate 87 serves as the catalytic Proton donor/acceptor.

This sequence belongs to the phosphoglycerate mutase family. BPG-dependent PGAM subfamily.

It carries out the reaction (2R)-2-phosphoglycerate = (2R)-3-phosphoglycerate. The protein operates within carbohydrate degradation; glycolysis; pyruvate from D-glyceraldehyde 3-phosphate: step 3/5. Its function is as follows. Catalyzes the interconversion of 2-phosphoglycerate and 3-phosphoglycerate. The chain is 2,3-bisphosphoglycerate-dependent phosphoglycerate mutase from Clostridium beijerinckii (strain ATCC 51743 / NCIMB 8052) (Clostridium acetobutylicum).